The following is a 293-amino-acid chain: Homoserine kinase (293 aa).

84–94 provides a ligand contact to ATP; the sequence is PLSRGLGSSSA.

It belongs to the GHMP kinase family. Homoserine kinase subfamily.

It is found in the cytoplasm. It carries out the reaction L-homoserine + ATP = O-phospho-L-homoserine + ADP + H(+). The protein operates within amino-acid biosynthesis; L-threonine biosynthesis; L-threonine from L-aspartate: step 4/5. Its function is as follows. Catalyzes the ATP-dependent phosphorylation of L-homoserine to L-homoserine phosphate. The polypeptide is Homoserine kinase (Aliarcobacter butzleri (strain RM4018) (Arcobacter butzleri)).